The sequence spans 165 residues: PTS system glucose-specific EIIA component (165 aa).

The PTS EIIA type-1 domain maps to 33-137; it reads DPVFAGRMMG…STITPIVITN (105 aa). Zn(2+)-binding residues include histidine 70 and histidine 85. Histidine 85 functions as the Tele-phosphohistidine intermediate; for EIIA activity in the catalytic mechanism. Histidine 85 is modified (phosphohistidine; by HPr).

As to quaternary structure, heterodimer with glycerol kinase (glpk). Zn(2+) serves as cofactor.

Its subcellular location is the cytoplasm. The phosphoenolpyruvate-dependent sugar phosphotransferase system (sugar PTS), a major carbohydrate active transport system, catalyzes the phosphorylation of incoming sugar substrates concomitantly with their translocation across the cell membrane. The enzyme II complex composed of PtsG and Crr is involved in glucose transport. This chain is PTS system glucose-specific EIIA component (crr), found in Bacillus anthracis.